Reading from the N-terminus, the 418-residue chain is Glutamyl-tRNA reductase (418 aa).

Residues 49-52 (TCNR), Ser-109, 114-116 (EPQ), and Gln-120 contribute to the substrate site. The active-site Nucleophile is Cys-50. Position 189–194 (189–194 (GAGETI)) interacts with NADP(+).

The protein belongs to the glutamyl-tRNA reductase family. Homodimer.

It catalyses the reaction (S)-4-amino-5-oxopentanoate + tRNA(Glu) + NADP(+) = L-glutamyl-tRNA(Glu) + NADPH + H(+). It functions in the pathway porphyrin-containing compound metabolism; protoporphyrin-IX biosynthesis; 5-aminolevulinate from L-glutamyl-tRNA(Glu): step 1/2. Its function is as follows. Catalyzes the NADPH-dependent reduction of glutamyl-tRNA(Glu) to glutamate 1-semialdehyde (GSA). The chain is Glutamyl-tRNA reductase from Escherichia coli O139:H28 (strain E24377A / ETEC).